The sequence spans 494 residues: Glutamate decarboxylase 2 (494 aa).

Lys-276 bears the N6-(pyridoxal phosphate)lysine mark. A calmodulin-binding region spans residues 463–494 (VKEKKMEKEILMEVIVGWRKFVKERKKMNGVC).

The protein belongs to the group II decarboxylase family. As to quaternary structure, homohexamer. Interacts with calmodulin. The cofactor is pyridoxal 5'-phosphate. In terms of tissue distribution, expressed in roots, inflorescence stems, flowers, siliques and leaves.

The catalysed reaction is L-glutamate + H(+) = 4-aminobutanoate + CO2. Its activity is regulated as follows. Up-regulated by calmodulin binding at physiological pH. Its function is as follows. Catalyzes the conversion of glutamate to 4-aminobutanoate (GABA). The calmodulin-binding is calcium-dependent and it is proposed to directly or indirectly form a calcium regulated control of GABA biosynthesis. The polypeptide is Glutamate decarboxylase 2 (GAD2) (Arabidopsis thaliana (Mouse-ear cress)).